The chain runs to 391 residues: Phosphoglycerate kinase (391 aa).

Residues 21 to 23 (DLN), Arg-36, 59 to 62 (HLGR), Arg-113, and Arg-146 each bind substrate. ATP is bound by residues Lys-197, Glu-319, and 345–348 (GGDT).

It belongs to the phosphoglycerate kinase family. In terms of assembly, monomer.

It localises to the cytoplasm. It carries out the reaction (2R)-3-phosphoglycerate + ATP = (2R)-3-phospho-glyceroyl phosphate + ADP. It functions in the pathway carbohydrate degradation; glycolysis; pyruvate from D-glyceraldehyde 3-phosphate: step 2/5. This Pseudoalteromonas atlantica (strain T6c / ATCC BAA-1087) protein is Phosphoglycerate kinase.